Here is a 271-residue protein sequence, read N- to C-terminus: Peroxisomal biogenesis factor 2 (271 aa).

At 1 to 2 (MS) the chain is on the peroxisomal matrix side. Residues 3–29 (RVAQLDSIALDKELYGQFWSEFNAAFN) traverse the membrane as a helical segment. The Cytoplasmic portion of the chain corresponds to 30–33 (TSEH). A helical transmembrane segment spans residues 34–60 (KEEWELALNTVVFMCATRFLPHYGSSC). Over 61–77 (TYGSALSGVVFQCRKRT) the chain is Peroxisomal matrix. The helical transmembrane segment at 78 to 97 (LYVVTVLAGYVWKKITHIIF) threads the bilayer. Residues 98-101 (NGPH) lie on the Cytoplasmic side of the membrane. The chain crosses the membrane as a helical span at residues 102–133 (CGNQMMWLKLYKWVNLLYHGCDVTNFLRFLAA). The Peroxisomal matrix portion of the chain corresponds to 134–175 (EGPNARAFLSPLYRAFNVHSTRLIRDGSAIASEFYSNSVFAG). Residues 176–197 (LEYQNRQLLWNALLELFSNTLL) form a helical membrane-spanning segment. Over 198–271 (TKRGLLTFVK…SGRLTASPVY (74 aa)) the chain is Cytoplasmic. Zn(2+)-binding residues include Cys222, Cys225, Cys237, Cys238, Cys243, Cys246, Cys256, and Cys259. The RING-type zinc-finger motif lies at 222–259 (CPRCGGFPTNPYQIACCRANYCYVCVVKALEWSMCDAC).

It belongs to the pex2/pex10/pex12 family. In terms of assembly, component of the PEX2-PEX10-PEX12 retrotranslocation channel, composed of PEX2, PEX10 and PEX12.

It is found in the peroxisome membrane. The catalysed reaction is [E2 ubiquitin-conjugating enzyme]-S-ubiquitinyl-L-cysteine + [acceptor protein]-L-cysteine = [E2 ubiquitin-conjugating enzyme]-L-cysteine + [acceptor protein]-S-ubiquitinyl-L-cysteine.. It functions in the pathway protein modification; protein ubiquitination. Its function is as follows. E3 ubiquitin-protein ligase component of a retrotranslocation channel required for peroxisome organization by mediating export of the PEX5 receptor from peroxisomes to the cytosol, thereby promoting PEX5 recycling. The retrotranslocation channel is composed of PEX2, PEX10 and PEX12; each subunit contributing transmembrane segments that coassemble into an open channel that specifically allows the passage of PEX5 through the peroxisomal membrane. PEX2 also regulates peroxisome organization by acting as a E3 ubiquitin-protein ligase. PEX2 ubiquitinates PEX5 during its passage through the retrotranslocation channel: catalyzes monoubiquitination of PEX5 at 'Cys-6', a modification that acts as a signal for PEX5 extraction into the cytosol. In Saccharomyces cerevisiae (strain ATCC 204508 / S288c) (Baker's yeast), this protein is Peroxisomal biogenesis factor 2.